The sequence spans 69 residues: DNA-directed RNA polymerase subunit epsilon (69 aa).

The protein belongs to the RNA polymerase subunit epsilon family. RNAP is composed of a core of 2 alpha, a beta and a beta' subunit. The core is associated with a delta subunit, and at least one of epsilon or omega. When a sigma factor is associated with the core the holoenzyme is formed, which can initiate transcription.

The enzyme catalyses RNA(n) + a ribonucleoside 5'-triphosphate = RNA(n+1) + diphosphate. A non-essential component of RNA polymerase (RNAP). This Halalkalibacterium halodurans (strain ATCC BAA-125 / DSM 18197 / FERM 7344 / JCM 9153 / C-125) (Bacillus halodurans) protein is DNA-directed RNA polymerase subunit epsilon.